The chain runs to 1426 residues: ABC transporter G family member 31 (1426 aa).

2 N-linked (GlcNAc...) asparagine glycosylation sites follow: asparagine 6 and asparagine 150. The ABC transporter 1 domain occupies 160–434; it reads LSSLRIIKPR…FESLGFRLPP (275 aa). 193–200 contacts ATP; that stretch reads GPPGSGKS. Asparagine 219 carries N-linked (GlcNAc...) asparagine glycosylation. Phosphothreonine is present on threonine 276. The ABC transmembrane type-2 1 domain occupies 512-725; sequence ENLKVCFVRE…GQRAIAVNEF (214 aa). 6 helical membrane-spanning segments follow: residues 530-550, 569-589, 618-638, 649-669, 675-695, and 760-780; these read FLYT…ATVF, CLFF…PLMI, VPYS…TVGL, MLLL…MASL, IANT…GFVI, and IGIA…TLAL. Positions 826–1078 constitute an ABC transporter 2 domain; the sequence is MTFHNVNYYV…VLVDYFQGIN (253 aa). Residue asparagine 856 is glycosylated (N-linked (GlcNAc...) asparagine). 871–878 is a binding site for ATP; it reads GSSGAGKT. Positions 1151 to 1365 constitute an ABC transmembrane type-2 2 domain; that stretch reads SQFLLCLWKQ…TLQGVILSQL (215 aa). 7 consecutive transmembrane segments (helical) span residues 1172–1192, 1202–1222, 1258–1278, 1285–1305, 1315–1335, 1342–1362, and 1396–1416; these read LVRL…FWDI, LITV…SNAS, IPYI…TIGF, FVLY…YGMM, LAAV…GFLV, VWWI…GVIL, and IGVS…AFAL.

The protein belongs to the ABC transporter superfamily. ABCG family. PDR (TC 3.A.1.205) subfamily. As to expression, expressed in seedlings, stems, leaves, siliques and inflorescence. In seeds, confined to the endosperm. Highly expressed in the tapetum of anthers.

It localises to the cell membrane. It catalyses the reaction abscisate(in) + ATP + H2O = abscisate(out) + ADP + phosphate + H(+). Together with ABCG25, export abscisic acid (ABA) from the endosperm to deliver it to the embryo via ABCG30 and ABCG40-mediated import to suppress radicle extension and subsequent embryonic growth. Together with ABCG9, involved in pollen coat deposition of steryl glycosides required for pollen fitness. May be a general defense protein. The polypeptide is ABC transporter G family member 31 (Arabidopsis thaliana (Mouse-ear cress)).